The sequence spans 156 residues: Acyl carrier protein, mitochondrial (156 aa).

The N-terminal 68 residues, Met1–Tyr68, are a transit peptide targeting the mitochondrion. Positions Glu77–Lys152 constitute a Carrier domain. The residue at position 88 (Lys88) is an N6-acetyllysine. Ser112 carries the post-translational modification O-(pantetheine 4'-phosphoryl)serine.

Mammalian complex I is composed of 45 different subunits. Interacts with ETFRF1. Identified in a complex composed of MALSU1, MIEF1 upstream open reading frame protein and NDUFAB1; within the trimeric complex MIEF1 upstream open reading frame protein functions as a bridging scaffold that interacts with MALSU1 on one side, and with NDUFAB1 on the other side. The complex interacts with the mitochondrial large ribosomal subunit. Interacts with alpha-1-microglobulin chain; this interaction is required for the maintenance of mitochondrial redox homeostasis. Component of the mitochondrial core iron-sulfur cluster (ISC) complex composed of NFS1, LYRM4, NDUFAB1, ISCU, FXN, and FDX2; this complex is a heterohexamer containing two copies of each monomer. Component of the cyteine desulfurase complex composed of NFS1, LYRM4 and NDUFAB1; this complex contributes to the stability and cysteine desulfurase activity of NFS1. Phosphopantetheinylation at Ser-112 is essential for interactions with LYR motif-containing proteins.

It localises to the mitochondrion. Functionally, carrier of the growing fatty acid chain in fatty acid biosynthesis. Accessory and non-catalytic subunit of the mitochondrial membrane respiratory chain NADH dehydrogenase (Complex I), which functions in the transfer of electrons from NADH to the respiratory chain. Accessory protein, of the core iron-sulfur cluster (ISC) assembly complex, that regulates, in association with LYRM4, the stability and the cysteine desulfurase activity of NFS1 and participates in the [2Fe-2S] clusters assembly on the scaffolding protein ISCU. The core iron-sulfur cluster (ISC) assembly complex is involved in the de novo synthesis of a [2Fe-2S] cluster, the first step of the mitochondrial iron-sulfur protein biogenesis. This process is initiated by the cysteine desulfurase complex (NFS1:LYRM4:NDUFAB1) that produces persulfide which is delivered on the scaffold protein ISCU in a FXN-dependent manner. Then this complex is stabilized by FDX2 which provides reducing equivalents to accomplish the [2Fe-2S] cluster assembly. Finally, the [2Fe-2S] cluster is transferred from ISCU to chaperone proteins, including HSCB, HSPA9 and GLRX5. In Bos taurus (Bovine), this protein is Acyl carrier protein, mitochondrial.